Here is a 194-residue protein sequence, read N- to C-terminus: uncharacterized protein (194 aa).

This is an uncharacterized protein from Haemophilus influenzae (strain ATCC 51907 / DSM 11121 / KW20 / Rd).